The chain runs to 64 residues: uncharacterized protein (64 aa).

As to expression, widely expressed; not found in breast.

This is an uncharacterized protein from Homo sapiens (Human).